The sequence spans 657 residues: MADTSGEVAAVPASGAANGLSNGAGATPAQPNNPLSRKLHKILETRLENDKEMLEALKALSAFFVENSLRTRRNLRGDIERRSLAINEEFVSIFKDVKEELESINEDVQAMSSCCQDMTSRLQAAKEQTQDLIVKTTKLQAENQRLEIRAQVADAFLSKFQLTSDEMTLLRGTRGGPVTEDFFKALGRVKQIHNDVKVLLRTNQQTAGLEIMEQMALLQETAYERLYRWAQSECRALTQESCDVSAVLTQAMEALQDRPVLYKYTLDEFGTARRSTVVRGFIDALTRGGPGGTPRPIEMHSHDPLRYVGDMLAWLHQATASEKEHLEALLKHVTAQGVKENIQEVVGHITEGVCRPLKVRIEQVILAEPGAVLLYKISNLLKFYHHTISGIVGNSAATLLTTIEEMHLLSKKIFFSSLSLHANKLMDKIELPPPDLGPSSALSQTLTLLRDVLASHDSSVVPLDARQADFVQVLSCVLDPLLQMCTVSASNLGTADMATFMVNSLYMMKTTLALFEFTDRRLEMLQFQIEAHLDTLINEQASYVLTRVGLSYIYNTIQQHRPDQGSLASMPNLDSVALKAAMAQFDRYLSAPDHLLMPQLNSLLSATVKEQIIKQSTELVCRAYGEVHAAVMNPVNAYKDPESILHRSPEQVKTLLS.

The span at 14 to 26 (SGAANGLSNGAGA) shows a compositional bias: low complexity. Positions 14–36 (SGAANGLSNGAGATPAQPNNPLS) are disordered.

This sequence belongs to the COG6 family. In terms of assembly, component of the conserved oligomeric Golgi complex which is composed of eight different subunits and is required for normal Golgi morphology and localization.

Its subcellular location is the golgi apparatus membrane. Required for normal Golgi function. In Rattus norvegicus (Rat), this protein is Conserved oligomeric Golgi complex subunit 6 (Cog6).